The sequence spans 586 residues: Probable zinc metalloprotease EGY3, chloroplastic (586 aa).

The N-terminal 54 residues, 1 to 54 (MSSSSLVTSLLFSSSSSSNTATSTSSRRSFSLFSKNQYCKPSPLRRSSSLLLVR), are a transit peptide targeting the chloroplast. Positions 62 to 73 (EEKAAPAAESHH) are enriched in basic and acidic residues. A disordered region spans residues 62 to 118 (EEKAAPAAESHHAGGGQDDAATASHHAVEGENGVADADGGGVKKSKEELEEEEQQEV). Residues 103–195 (VKKSKEELEE…NTFKALDLNK (93 aa)) are a coiled coil. Helical transmembrane passes span 287 to 307 (LSAV…SGFF), 318 to 338 (VSDV…SEIA), 389 to 409 (ASAY…DGSL), 427 to 447 (PLLS…GNVL), 454 to 474 (VGVP…VTSL), 506 to 526 (VALG…WGLF), and 550 to 570 (YAWG…NGGG).

The protein belongs to the peptidase M50B family.

It localises to the plastid. The protein resides in the chloroplast membrane. Probable membrane-associated metalloprotease that may be involved in chloroplast development. This Oryza sativa subsp. indica (Rice) protein is Probable zinc metalloprotease EGY3, chloroplastic (EGY3).